Consider the following 229-residue polypeptide: Large ribosomal subunit protein uL1 (229 aa).

This sequence belongs to the universal ribosomal protein uL1 family. As to quaternary structure, part of the 50S ribosomal subunit.

Binds directly to 23S rRNA. The L1 stalk is quite mobile in the ribosome, and is involved in E site tRNA release. Its function is as follows. Protein L1 is also a translational repressor protein, it controls the translation of the L11 operon by binding to its mRNA. The sequence is that of Large ribosomal subunit protein uL1 from Rhodopseudomonas palustris (strain TIE-1).